The following is a 304-amino-acid chain: Murein tetrapeptide carboxypeptidase (304 aa).

Ser106 acts as the Nucleophile in catalysis. Active-site charge relay system residues include Glu200 and His270.

The protein belongs to the peptidase S66 family.

It localises to the cytoplasm. It catalyses the reaction N-acetyl-D-glucosaminyl-N-acetylmuramoyl-L-alanyl-meso-2,6-diaminoheptanedioyl-D-alanine + H2O = N-acetyl-D-glucosaminyl-N-acetylmuramoyl-L-alanyl-meso-2,6-diaminoheptanedioate + D-alanine. It participates in cell wall biogenesis; peptidoglycan recycling. Functionally, releases the terminal D-alanine residue from the cytoplasmic tetrapeptide recycling product L-Ala-gamma-D-Glu-meso-Dap-D-Ala. Can also cleave D-Ala from murein derivatives containing the tetrapeptide, i.e. MurNAc-tetrapeptide, UDP-MurNAc-tetrapeptide, GlcNAc-MurNAc-tetrapeptide, and GlcNAc-anhMurNAc-tetrapeptide. Does not act on murein sacculi or cross-linked muropeptides. The tripeptides produced by the LcdA reaction can then be reused as peptidoglycan building blocks; LcdA is thereby involved in murein recycling. This chain is Murein tetrapeptide carboxypeptidase (ldcA), found in Escherichia coli O6:H1 (strain CFT073 / ATCC 700928 / UPEC).